The chain runs to 111 residues: Large ribosomal subunit protein eL34B (111 aa).

Tyrosine 76 bears the Phosphotyrosine mark.

The protein belongs to the eukaryotic ribosomal protein eL34 family. In terms of assembly, component of the large ribosomal subunit (LSU). Mature yeast ribosomes consist of a small (40S) and a large (60S) subunit. The 40S small subunit contains 1 molecule of ribosomal RNA (18S rRNA) and at least 33 different proteins. The large 60S subunit contains 3 rRNA molecules (25S, 5.8S and 5S rRNA) and at least 46 different proteins.

Its subcellular location is the cytoplasm. The protein resides in the nucleus. It localises to the nucleolus. Component of the ribosome, a large ribonucleoprotein complex responsible for the synthesis of proteins in the cell. The small ribosomal subunit (SSU) binds messenger RNAs (mRNAs) and translates the encoded message by selecting cognate aminoacyl-transfer RNA (tRNA) molecules. The large subunit (LSU) contains the ribosomal catalytic site termed the peptidyl transferase center (PTC), which catalyzes the formation of peptide bonds, thereby polymerizing the amino acids delivered by tRNAs into a polypeptide chain. The nascent polypeptides leave the ribosome through a tunnel in the LSU and interact with protein factors that function in enzymatic processing, targeting, and the membrane insertion of nascent chains at the exit of the ribosomal tunnel. The sequence is that of Large ribosomal subunit protein eL34B (rpl3402) from Schizosaccharomyces pombe (strain 972 / ATCC 24843) (Fission yeast).